Reading from the N-terminus, the 272-residue chain is Phosphoglycolate phosphatase (272 aa).

The active-site Nucleophile is aspartate 19. 3 residues coordinate Mg(2+): aspartate 19, aspartate 21, and aspartate 182.

Belongs to the HAD-like hydrolase superfamily. CbbY/CbbZ/Gph/YieH family. The cofactor is Mg(2+).

It carries out the reaction 2-phosphoglycolate + H2O = glycolate + phosphate. It participates in organic acid metabolism; glycolate biosynthesis; glycolate from 2-phosphoglycolate: step 1/1. Specifically catalyzes the dephosphorylation of 2-phosphoglycolate. Is involved in the dissimilation of the intracellular 2-phosphoglycolate formed during the DNA repair of 3'-phosphoglycolate ends, a major class of DNA lesions induced by oxidative stress. The sequence is that of Phosphoglycolate phosphatase from Pseudomonas syringae pv. syringae (strain B728a).